The primary structure comprises 195 residues: Ferredoxin-2, mitochondrial (195 aa).

A mitochondrion-targeting transit peptide spans 1 to 61 (MAAAAAVRAG…RRLRTSIGVC (61 aa)). The 2Fe-2S ferredoxin-type domain occupies 81-182 (NVVYIDRSGR…GMELTLPKVT (102 aa)). [2Fe-2S] cluster-binding residues include Cys117, Cys123, Cys126, and Cys163.

It belongs to the adrenodoxin/putidaredoxin family. Component of the mitochondrial core iron-sulfur cluster (ISC) complex composed of NFS1, LYRM4, NDUFAB1, ISCU, FXN, and FDX2; this complex is a heterohexamer containing two copies of each monomer. Form a heterodimer complex with NFS1. The cofactor is [2Fe-2S] cluster.

It localises to the mitochondrion. It is found in the mitochondrion matrix. In terms of biological role, electron donor, of the core iron-sulfur cluster (ISC) assembly complex, that acts to reduce the persulfide into sulfide during [2Fe-2S] clusters assembly on the scaffolding protein ISCU. The core iron-sulfur cluster (ISC) assembly complex is involved in the de novo synthesis of a [2Fe-2S] cluster, the first step of the mitochondrial iron-sulfur protein biogenesis. This process is initiated by the cysteine desulfurase complex (NFS1:LYRM4:NDUFAB1) that produces persulfide which is delivered on the scaffold protein ISCU in a FXN-dependent manner. Then this complex is stabilized by FDX2 which provides reducing equivalents to accomplish the [2Fe-2S] cluster assembly. Finally, the [2Fe-2S] cluster is transferred from ISCU to chaperone proteins, including HSCB, HSPA9 and GLRX5. Essential for coenzyme Q biosynthesis: together with FDXR, transfers the electrons required for the hydroxylation reaction performed by COQ6. The chain is Ferredoxin-2, mitochondrial from Danio rerio (Zebrafish).